A 271-amino-acid chain; its full sequence is Phthiotriol/phenolphthiotriol dimycocerosates methyltransferase 1 (271 aa).

It belongs to the methyltransferase superfamily. Phthiotriol/phenolphthiotriol dimycocerosates methyltransferase family.

Its function is as follows. Catalyzes the methylation of the lipid moiety of the intermediate compounds phthiotriol and glycosylated phenolphthiotriol dimycoserosates to form phthiocerol dimycocerosates (DIM A) and glycosylated phenolphthiocerol dimycocerosates (PGL). This chain is Phthiotriol/phenolphthiotriol dimycocerosates methyltransferase 1, found in Mycobacterium ulcerans (strain Agy99).